A 487-amino-acid chain; its full sequence is UDP-N-acetylmuramate--L-alanine ligase (487 aa).

126–132 (GTHGKTT) lines the ATP pocket.

The protein belongs to the MurCDEF family.

The protein resides in the cytoplasm. It catalyses the reaction UDP-N-acetyl-alpha-D-muramate + L-alanine + ATP = UDP-N-acetyl-alpha-D-muramoyl-L-alanine + ADP + phosphate + H(+). It functions in the pathway cell wall biogenesis; peptidoglycan biosynthesis. Cell wall formation. The protein is UDP-N-acetylmuramate--L-alanine ligase of Psychromonas ingrahamii (strain DSM 17664 / CCUG 51855 / 37).